The following is a 585-amino-acid chain: Mitochondrial sodium/calcium exchanger protein (585 aa).

An N-terminal signal peptide occupies residues Met1 to Gly26. The Extracellular segment spans residues Thr27 to Leu95. Asn46 carries N-linked (GlcNAc...) asparagine glycosylation. Residues Leu96–Val116 traverse the membrane as a helical segment. The Cytoplasmic segment spans residues Thr117 to Ala140. The chain crosses the membrane as a helical span at residues Gly141–Phe161. At Ser162–Gly168 the chain is on the extracellular side. The helical transmembrane segment at Leu169–Ile189 threads the bilayer. At Thr190–Asp205 the chain is on the cytoplasmic side. The helical transmembrane segment at Ile206–Thr226 threads the bilayer. Residues Leu227 to Trp229 lie on the Extracellular side of the membrane. Residues Ala230 to Val250 traverse the membrane as a helical segment. At Tyr251–Arg325 the chain is on the cytoplasmic side. Phosphoserine; by PKA is present on Ser258. Residues Val326–Asp346 traverse the membrane as a helical segment. The Extracellular segment spans residues Pro347–Cys360. The chain crosses the membrane as a helical span at residues Leu361–Ile381. Over Tyr382–Glu383 the chain is Cytoplasmic. A helical membrane pass occupies residues Ile384–Val404. At Thr405–Arg416 the chain is on the extracellular side. A helical transmembrane segment spans residues Leu417–Ala437. Topologically, residues Thr438–Arg445 are cytoplasmic. A helical transmembrane segment spans residues Ser446–Gly466. Residues Asn467 to Cys491 are Extracellular-facing. Residues Phe492 to Ile512 traverse the membrane as a helical segment. At Arg513–Gly525 the chain is on the cytoplasmic side. A helical membrane pass occupies residues Leu526–Val546. Over Pro547–Leu559 the chain is Extracellular. A helical transmembrane segment spans residues Cys560–Ile580. The Cytoplasmic portion of the chain corresponds to His581–Ala585.

This sequence belongs to the Ca(2+):cation antiporter (CaCA) (TC 2.A.19) family. SLC24A subfamily. In terms of processing, phosphorylation at Ser-258 by PKA prevents calcium overload. As to expression, ubiquitously expressed. Expressed in dental tissues.

Its subcellular location is the mitochondrion inner membrane. It localises to the cell membrane. The catalysed reaction is Ca(2+)(in) + 3 Na(+)(out) = Ca(2+)(out) + 3 Na(+)(in). The enzyme catalyses 3 Li(+)(out) + Ca(2+)(in) = 3 Li(+)(in) + Ca(2+)(out). With respect to regulation, inhibited by the sodium/calcium exchanger inhibitor CGP-37157. Strongly inhibited by zinc. In terms of biological role, mitochondrial sodium/calcium antiporter that mediates sodium-dependent calcium efflux from mitochondrion, by mediating the exchange of 3 sodium ions per 1 calcium ion. Plays a central role in mitochondrial calcium homeostasis by mediating mitochondrial calcium extrusion: calcium efflux is essential for mitochondrial function and cell survival, notably in cardiomyocytes. Regulates rates of glucose-dependent insulin secretion in pancreatic beta-cells during the first phase of insulin secretion: acts by mediating efflux of calcium from mitochondrion, thereby affecting cytoplasmic calcium responses. Required for store-operated Ca(2+) entry (SOCE) and Ca(2+) release-activated Ca(2+) (CRAC) channel regulation: sodium transport by SLC8B1 leads to promote calcium-shuttling that modulates mitochondrial redox status, thereby regulating SOCE activity. Involved in B-lymphocyte chemotaxis. Able to transport Ca(2+) in exchange of either Li(+) or Na(+), explaining how Li(+) catalyzes Ca(2+) exchange. In contrast to other members of the family its function is independent of K(+). This chain is Mitochondrial sodium/calcium exchanger protein, found in Mus musculus (Mouse).